The sequence spans 179 residues: Large ribosomal subunit protein uL5 (179 aa).

The protein belongs to the universal ribosomal protein uL5 family. Part of the 50S ribosomal subunit; part of the 5S rRNA/L5/L18/L25 subcomplex. Contacts the 5S rRNA and the P site tRNA. Forms a bridge to the 30S subunit in the 70S ribosome.

In terms of biological role, this is one of the proteins that bind and probably mediate the attachment of the 5S RNA into the large ribosomal subunit, where it forms part of the central protuberance. In the 70S ribosome it contacts protein S13 of the 30S subunit (bridge B1b), connecting the 2 subunits; this bridge is implicated in subunit movement. Contacts the P site tRNA; the 5S rRNA and some of its associated proteins might help stabilize positioning of ribosome-bound tRNAs. In Klebsiella pneumoniae (strain 342), this protein is Large ribosomal subunit protein uL5.